A 165-amino-acid polypeptide reads, in one-letter code: MSNSRPAHARKAEIVAEIVSKIKSAQGVAIAEYKHLTVAKMTELRVQALKQNIDIKVYKDSLVRRAVEELGLVDLIPFLTQQNVFIFSNEDSISAAKLVANFAKKNEALKLKAGIYEGKVVDTAGINEVASLPSKEELYSMFASSLLYPLRKVMAAINAVAETRN.

This sequence belongs to the universal ribosomal protein uL10 family. In terms of assembly, part of the ribosomal stalk of the 50S ribosomal subunit. The N-terminus interacts with L11 and the large rRNA to form the base of the stalk. The C-terminus forms an elongated spine to which L12 dimers bind in a sequential fashion forming a multimeric L10(L12)X complex.

Forms part of the ribosomal stalk, playing a central role in the interaction of the ribosome with GTP-bound translation factors. This is Large ribosomal subunit protein uL10 from Mycoplasma capricolum subsp. capricolum (strain California kid / ATCC 27343 / NCTC 10154).